Consider the following 580-residue polypeptide: Aspartate--tRNA ligase (580 aa).

Position 173 (glutamate 173) interacts with L-aspartate. Residues 195–198 (QIYK) are aspartate. Arginine 217 is an L-aspartate binding site. ATP-binding positions include 217–219 (RDE) and glutamine 226. Histidine 443 provides a ligand contact to L-aspartate. Glutamate 477 is an ATP binding site. Residue arginine 484 coordinates L-aspartate. 529-532 (GIER) lines the ATP pocket.

Belongs to the class-II aminoacyl-tRNA synthetase family. Type 1 subfamily. Homodimer.

The protein localises to the cytoplasm. It catalyses the reaction tRNA(Asp) + L-aspartate + ATP = L-aspartyl-tRNA(Asp) + AMP + diphosphate. In terms of biological role, catalyzes the attachment of L-aspartate to tRNA(Asp) in a two-step reaction: L-aspartate is first activated by ATP to form Asp-AMP and then transferred to the acceptor end of tRNA(Asp). The polypeptide is Aspartate--tRNA ligase (Malacoplasma penetrans (strain HF-2) (Mycoplasma penetrans)).